The primary structure comprises 521 residues: MMFEYEEDEDPMEQQKHEEFKHHSTDHSGSPQENPFRFSYDTGKRAASMFVTPSSEDLIAYGTKHLLDSPTAVQRSLVLNATTSLNIDCDLSSDDDLSPTTQRKICFCASQNPAETQEQGLRPAKSTLAISFPCHQHQITEDYTISAEIIGIGESGKVMACYQKVTGEKFALKVLRDSQKARREVELHWLTNAHENVVSILDIYENTFDNVKCLLMVVEFLEGGDLLSQFESQGSIPYTEKKVGEIIRQIGNAVMYLHDMNIAHRDIKLENILCSGTGDNCVYKLGDYGFAKRPERNVLMESPCCTPFYAPPEVLGRERYDKSCDMWSLGVAMYILLCGYPPFYSMKGVALSPGMRSRIANAYYAFPHEEWDCVSKDTKDDIRCLLRTNPSDRLTIHELMATPLVTGEPIVPGKHITTAIAIPGADESECGGGVFDDGFIVEEEETPDTVAEILPVPKSVRFLRDGVKAPRLHSIQEEVGRAMEIMRMGTDQVYIKNPTASCNNLFERRRAVHLSIPRVYC.

Residues 1–12 show a composition bias toward acidic residues; it reads MMFEYEEDEDPM. The tract at residues 1-36 is disordered; sequence MMFEYEEDEDPMEQQKHEEFKHHSTDHSGSPQENPF. Over residues 13-26 the composition is skewed to basic and acidic residues; sequence EQQKHEEFKHHSTD. One can recognise a Protein kinase domain in the interval 144–405; sequence TISAEIIGIG…IHELMATPLV (262 aa). Residues 150 to 158 and lysine 173 contribute to the ATP site; that span reads IGIGESGKV. The active-site Proton acceptor is the aspartate 266.

It belongs to the protein kinase superfamily. CAMK Ser/Thr protein kinase family. In terms of assembly, may interact (via protein kinase domain) with unc-22 (via protein kinase and CRD domains). Requires Mg(2+) as cofactor. Post-translationally, autophosphorylated in vitro. In terms of tissue distribution, expressed in body wall muscles (at protein level). Expressed in intestine.

It localises to the cytoplasm. The protein resides in the myofibril. It is found in the sarcomere. The protein localises to the a band. It catalyses the reaction L-seryl-[protein] + ATP = O-phospho-L-seryl-[protein] + ADP + H(+). The enzyme catalyses L-threonyl-[protein] + ATP = O-phospho-L-threonyl-[protein] + ADP + H(+). Its function is as follows. Serine/threonine-protein kinase which may play a role in body wall muscle contraction. May phosphorylate unc-22/twitchin. In Caenorhabditis elegans, this protein is MAP kinase-activated protein kinase mak-1.